Reading from the N-terminus, the 1053-residue chain is Probable dihydropyrimidine dehydrogenase [NADP(+)] (1053 aa).

The 32-residue stretch at 84-115 (ERGALKEAMRCLKCADAPCQKSCPTQLDIKSF) folds into the 4Fe-4S ferredoxin-type 1 domain. C94, C97, C102, C106, C145, C151, C155, and Q171 together coordinate [4Fe-4S] cluster. Residues 207-211 (GCGPA), 231-239 (EKRAYIGGL), R248, and L274 each bind FAD. NADP(+)-binding positions include 354–357 (AGDT), 378–379 (RK), R385, 451–453 (AFG), and 495–501 (DVAGVAE). 494–503 (GDVAGVAETT) provides a ligand contact to FAD. FMN contacts are provided by residues S574 and 598-599 (KT). Residues N633 and 692–694 (NLS) each bind substrate. C695 acts as the Proton acceptor in catalysis. Residue K733 participates in FMN binding. 760–761 (NT) provides a ligand contact to substrate. FMN contacts are provided by residues G791, 817–819 (TGG), and 840–841 (CS). 2 consecutive 4Fe-4S ferredoxin-type domains span residues 949 to 981 (EVAIIDHDMCINCGKCYMTCNDSGYQAITFDAV) and 983 to 1013 (HQPHVTEDDCTGCTLCYSVCPIPECIQMVPR). 8 residues coordinate [4Fe-4S] cluster: C958, C961, C964, C968, C992, C995, C998, and C1002.

Belongs to the dihydropyrimidine dehydrogenase family. [4Fe-4S] cluster is required as a cofactor. The cofactor is FAD. It depends on FMN as a cofactor.

It carries out the reaction 5,6-dihydrouracil + NADP(+) = uracil + NADPH + H(+). Its pathway is amino-acid biosynthesis; beta-alanine biosynthesis. Involved in pyrimidine base degradation. Catalyzes the reduction of uracil and thymine. Also involved the degradation of the chemotherapeutic drug 5-fluorouracil. This is Probable dihydropyrimidine dehydrogenase [NADP(+)] from Caenorhabditis briggsae.